Here is a 220-residue protein sequence, read N- to C-terminus: Small ribosomal subunit protein uS3 (220 aa).

Positions 38-106 (IRNFINKKLQ…QVHINIVEIK (69 aa)) constitute a KH type-2 domain.

It belongs to the universal ribosomal protein uS3 family. In terms of assembly, part of the 30S ribosomal subunit. Forms a tight complex with proteins S10 and S14.

Binds the lower part of the 30S subunit head. Binds mRNA in the 70S ribosome, positioning it for translation. This Lacticaseibacillus paracasei (strain ATCC 334 / BCRC 17002 / CCUG 31169 / CIP 107868 / KCTC 3260 / NRRL B-441) (Lactobacillus paracasei) protein is Small ribosomal subunit protein uS3.